The chain runs to 150 residues: Phosphopantetheine adenylyltransferase (150 aa).

Substrate is bound at residue Ser-10. ATP contacts are provided by residues 10–11 (SF) and His-18. Residues Lys-42, Thr-74, and Arg-88 each contribute to the substrate site. ATP contacts are provided by residues 89–91 (GLR), Glu-99, and 124–130 (LAYISSS).

Belongs to the bacterial CoaD family. As to quaternary structure, homohexamer. It depends on Mg(2+) as a cofactor.

The protein localises to the cytoplasm. It catalyses the reaction (R)-4'-phosphopantetheine + ATP + H(+) = 3'-dephospho-CoA + diphosphate. It participates in cofactor biosynthesis; coenzyme A biosynthesis; CoA from (R)-pantothenate: step 4/5. Its function is as follows. Reversibly transfers an adenylyl group from ATP to 4'-phosphopantetheine, yielding dephospho-CoA (dPCoA) and pyrophosphate. This Cytophaga hutchinsonii (strain ATCC 33406 / DSM 1761 / CIP 103989 / NBRC 15051 / NCIMB 9469 / D465) protein is Phosphopantetheine adenylyltransferase.